A 425-amino-acid polypeptide reads, in one-letter code: UDP-N-acetylglucosamine 1-carboxyvinyltransferase (425 aa).

Residue 31 to 32 (KN) coordinates phosphoenolpyruvate. R100 lines the UDP-N-acetyl-alpha-D-glucosamine pocket. C124 serves as the catalytic Proton donor. Position 124 is a 2-(S-cysteinyl)pyruvic acid O-phosphothioketal (C124). UDP-N-acetyl-alpha-D-glucosamine is bound by residues 129–133 (RPIDQ), 170–172 (TVT), D311, and I333.

This sequence belongs to the EPSP synthase family. MurA subfamily.

The protein resides in the cytoplasm. The enzyme catalyses phosphoenolpyruvate + UDP-N-acetyl-alpha-D-glucosamine = UDP-N-acetyl-3-O-(1-carboxyvinyl)-alpha-D-glucosamine + phosphate. The protein operates within cell wall biogenesis; peptidoglycan biosynthesis. In terms of biological role, cell wall formation. Adds enolpyruvyl to UDP-N-acetylglucosamine. In Aquifex aeolicus (strain VF5), this protein is UDP-N-acetylglucosamine 1-carboxyvinyltransferase.